The chain runs to 71 residues: Protein SlyX homolog (71 aa).

Residues 49–71 (KIKESQSSSSMMSNEPEPPPPHY) form a disordered region.

Belongs to the SlyX family.

The sequence is that of Protein SlyX homolog from Pseudoalteromonas translucida (strain TAC 125).